The sequence spans 198 residues: Large ribosomal subunit protein eL18 (198 aa).

Residues 157–198 (RHFGASGVPGSHSKPYATNRGKETKRGRRTGRSYKRKAFRHV) form a disordered region. The span at 179–198 (ETKRGRRTGRSYKRKAFRHV) shows a compositional bias: basic residues.

The protein belongs to the eukaryotic ribosomal protein eL18 family.

It is found in the cytoplasm. This chain is Large ribosomal subunit protein eL18 (RPL18-A), found in Leishmania major.